A 460-amino-acid chain; its full sequence is Serine/threonine-protein kinase UL13 (460 aa).

Positions 1-37 are disordered; sequence MATRGRPGAKQVADHSVSDGGEQRRIPQKPPGPERCD. Residues 12 to 25 show a composition bias toward basic and acidic residues; it reads VADHSVSDGGEQRR. One can recognise a Protein kinase domain in the interval 95-460; the sequence is LEPYRFLGRG…DVRRTVSALA (366 aa). ATP contacts are provided by residues 101 to 109 and K120; that span reads LGRGGYGSV. D219 (proton acceptor) is an active-site residue.

The protein belongs to the protein kinase superfamily. Ser/Thr protein kinase family. In terms of processing, autophosphorylated.

It is found in the virion tegument. It localises to the host nucleus. It carries out the reaction L-seryl-[protein] + ATP = O-phospho-L-seryl-[protein] + ADP + H(+). The enzyme catalyses L-threonyl-[protein] + ATP = O-phospho-L-threonyl-[protein] + ADP + H(+). Functionally, multifunctional serine/threonine kinase that plays a role in several processes including egress of virus particles from the nucleus, modulation of the actin cytoskeleton and regulation of viral and cellular gene expression. Regulates the nuclear localization of viral envelopment factors UL34 and UL31 homologs, by phosphorylating the US3 kinase homolog, indicating a role in nuclear egress. Disrupts host nuclear lamins, including LMNA and LMNB1. Phosphorylates the viral Fc receptor composed of glycoproteins E (gE) and I (gI). Phosphorylation of glycoprotein E (gE) by UL13 homolog alters its subcellular localization, from the host early endosome to the plasma membrane. Participates in the transcriptional regulation of cellular and viral mRNAs mainly by phosphorylating the viral transcriptional regulator ICP22 homolog. The polypeptide is Serine/threonine-protein kinase UL13 (UL13) (Amazona oratrix (yellow-headed parrot)).